Consider the following 275-residue polypeptide: Light-independent protochlorophyllide reductase iron-sulfur ATP-binding protein (275 aa).

ATP-binding positions include glycine 12–threonine 17 and lysine 41. Mg(2+) is bound at residue serine 16. Positions 97 and 131 each coordinate [4Fe-4S] cluster. Residue asparagine 182–arginine 183 coordinates ATP.

This sequence belongs to the NifH/BchL/ChlL family. Homodimer. Protochlorophyllide reductase is composed of three subunits; BchL, BchN and BchB. The cofactor is [4Fe-4S] cluster.

The enzyme catalyses chlorophyllide a + oxidized 2[4Fe-4S]-[ferredoxin] + 2 ADP + 2 phosphate = protochlorophyllide a + reduced 2[4Fe-4S]-[ferredoxin] + 2 ATP + 2 H2O. It participates in porphyrin-containing compound metabolism; bacteriochlorophyll biosynthesis (light-independent). In terms of biological role, component of the dark-operative protochlorophyllide reductase (DPOR) that uses Mg-ATP and reduced ferredoxin to reduce ring D of protochlorophyllide (Pchlide) to form chlorophyllide a (Chlide). This reaction is light-independent. The L component serves as a unique electron donor to the NB-component of the complex, and binds Mg-ATP. The sequence is that of Light-independent protochlorophyllide reductase iron-sulfur ATP-binding protein from Prosthecochloris aestuarii (strain DSM 271 / SK 413).